Here is a 226-residue protein sequence, read N- to C-terminus: N-(5'-phosphoribosyl)anthranilate isomerase (226 aa).

It belongs to the TrpF family.

It catalyses the reaction N-(5-phospho-beta-D-ribosyl)anthranilate = 1-(2-carboxyphenylamino)-1-deoxy-D-ribulose 5-phosphate. The protein operates within amino-acid biosynthesis; L-tryptophan biosynthesis; L-tryptophan from chorismate: step 3/5. In Candida albicans (strain SC5314 / ATCC MYA-2876) (Yeast), this protein is N-(5'-phosphoribosyl)anthranilate isomerase (TRP1).